Reading from the N-terminus, the 166-residue chain is NAD(P)H-quinone oxidoreductase subunit I, chloroplastic (166 aa).

4Fe-4S ferredoxin-type domains follow at residues 55–84 (GRIHFEFDKCIACEVCVRVCPIDLPVVDWK) and 95–124 (LNYSIDFGICIFCGNCVEYCPTNCLSMTEE). [4Fe-4S] cluster is bound by residues Cys-64, Cys-67, Cys-70, Cys-74, Cys-104, Cys-107, Cys-110, and Cys-114.

Belongs to the complex I 23 kDa subunit family. As to quaternary structure, NDH is composed of at least 16 different subunits, 5 of which are encoded in the nucleus. It depends on [4Fe-4S] cluster as a cofactor.

The protein resides in the plastid. The protein localises to the chloroplast thylakoid membrane. It catalyses the reaction a plastoquinone + NADH + (n+1) H(+)(in) = a plastoquinol + NAD(+) + n H(+)(out). The catalysed reaction is a plastoquinone + NADPH + (n+1) H(+)(in) = a plastoquinol + NADP(+) + n H(+)(out). Its function is as follows. NDH shuttles electrons from NAD(P)H:plastoquinone, via FMN and iron-sulfur (Fe-S) centers, to quinones in the photosynthetic chain and possibly in a chloroplast respiratory chain. The immediate electron acceptor for the enzyme in this species is believed to be plastoquinone. Couples the redox reaction to proton translocation, and thus conserves the redox energy in a proton gradient. This is NAD(P)H-quinone oxidoreductase subunit I, chloroplastic from Aphanactis jamesoniana.